An 83-amino-acid chain; its full sequence is MSSAIKILALLMVLVALAQAKPRKDYRAYPDFDDKSVILEDDKRCDPDKRDSVCKDVCGMLDIGTENGECPGKEVCCVDLFGR.

Residues 1 to 20 (MSSAIKILALLMVLVALAQA) form the signal peptide. Positions 21 to 44 (KPRKDYRAYPDFDDKSVILEDDKR) are excised as a propeptide. F81 bears the Phenylalanine amide mark.

In terms of processing, contains 3 disulfide bonds.

It localises to the secreted. It is found in the nematocyst. In vivo, induces immediate paralysis on shrimps (C.multidentata), followed by death when high doses are injected. No activity is observed when injected into fly larvae (M.domestica). In Epiactis japonica (Sea anemone), this protein is Toxin CjTL8.